A 604-amino-acid polypeptide reads, in one-letter code: Complement factor I (604 aa).

The N-terminal stretch at 1-18 is a signal peptide; the sequence is MKLALLILLLLNPHLSSS. Cystine bridges form between Cys-36–Cys-260, Cys-46–Cys-57, Cys-51–Cys-62, Cys-64–Cys-96, Cys-70–Cys-89, Cys-78–Cys-109, Cys-144–Cys-186, Cys-157–Cys-219, Cys-191–Cys-201, Cys-234–Cys-252, Cys-246–Cys-261, Cys-264–Cys-276, Cys-271–Cys-289, Cys-283–Cys-298, Cys-349–Cys-474, Cys-387–Cys-403, Cys-395–Cys-465, Cys-488–Cys-552, Cys-516–Cys-531, and Cys-542–Cys-571. Asn-40 carries an N-linked (GlcNAc...) asparagine glycan. Residues 58–111 enclose the Kazal-like domain; sequence IEGTCACKLPYQCPKAGTPVCATNGRGYPTYCHLKSFECLHPEIKFSNNGTCTA. Residues Asn-106, Asn-116, and Asn-182 are each glycosylated (N-linked (GlcNAc...) asparagine). The SRCR domain occupies 117 to 217; the sequence is VSLIYGSTDT…SKAPHGLAGV (101 aa). 2 LDL-receptor class A domains span residues 218 to 262 and 263 to 299; these read VCYT…LCCK and GCRG…SGCE. 6 residues coordinate Ca(2+): Lys-244, Asp-247, Val-249, Asp-251, Asp-257, and Glu-258. Ca(2+) contacts are provided by Asn-284, Glu-286, Asp-288, Asp-294, and Glu-295. In terms of domain architecture, Peptidase S1 spans 362–595; sequence VVGGKPAEMG…YFDWISYYVG (234 aa). Residues His-402 and Asp-450 each act as charge relay system in the active site. Residue Asn-515 is glycosylated (N-linked (GlcNAc...) asparagine). Ser-546 serves as the catalytic Charge relay system. A glycan (N-linked (GlcNAc...) asparagine) is linked at Asn-557.

The protein belongs to the peptidase S1 family. As to quaternary structure, heterodimer of a light and heavy chains; disulfide-linked. The fully processed and mature protein circulates as a zymogen, and is allosterically activated by substrate-induced remodeling of the active site. Interacts with C3b. Interacts with complement factor H. As to expression, expressed in the liver by hepatocytes. Also present in other cells such as monocytes, fibroblasts or keratinocytes.

The protein resides in the secreted. It is found in the extracellular space. It carries out the reaction Inactivates complement subcomponents C3b, iC3b and C4b by proteolytic cleavage.. Functionally, trypsin-like serine protease that plays an essential role in regulating the immune response by controlling all complement pathways. Inhibits these pathways by cleaving three peptide bonds in the alpha-chain of C3b and two bonds in the alpha-chain of C4b thereby inactivating these proteins. Essential cofactors for these reactions include factor H and C4BP in the fluid phase and membrane cofactor protein/CD46 and CR1 on cell surfaces. The presence of these cofactors on healthy cells allows degradation of deposited C3b by CFI in order to prevent undesired complement activation, while in apoptotic cells or microbes, the absence of such cofactors leads to C3b-mediated complement activation and subsequent opsonization. The chain is Complement factor I (Cfi) from Rattus norvegicus (Rat).